The chain runs to 387 residues: 3-ketoacyl-CoA thiolase (387 aa).

C91 acts as the Acyl-thioester intermediate in catalysis. Residues H343 and C373 each act as proton acceptor in the active site.

It belongs to the thiolase-like superfamily. Thiolase family. As to quaternary structure, heterotetramer of two alpha chains (FadB) and two beta chains (FadA).

The protein localises to the cytoplasm. It carries out the reaction an acyl-CoA + acetyl-CoA = a 3-oxoacyl-CoA + CoA. The protein operates within lipid metabolism; fatty acid beta-oxidation. Functionally, catalyzes the final step of fatty acid oxidation in which acetyl-CoA is released and the CoA ester of a fatty acid two carbons shorter is formed. In Shigella flexneri serotype 5b (strain 8401), this protein is 3-ketoacyl-CoA thiolase.